A 113-amino-acid polypeptide reads, in one-letter code: MKVIAAYLLAVLGGNTSPTADDVKSILESVGAEADEEKLEFLLTELKDKDITEVIAAGRERLSSVPSGGGAIDMGAPAAVAGGGAAPAEEAKKEEKVEEKEESDEDMGFSLFD.

Positions 66–113 (PSGGGAIDMGAPAAVAGGGAAPAEEAKKEEKVEEKEESDEDMGFSLFD) are disordered. The span at 89 to 99 (EEAKKEEKVEE) shows a compositional bias: basic and acidic residues.

It belongs to the eukaryotic ribosomal protein P1/P2 family. P1 and P2 exist as dimers at the large ribosomal subunit. Post-translationally, phosphorylated.

Plays an important role in the elongation step of protein synthesis. The protein is Large ribosomal subunit protein P2B (RPP2B) of Zea mays (Maize).